The primary structure comprises 432 residues: D-amino acid dehydrogenase 1 (432 aa).

3-17 is a binding site for FAD; sequence VLVLGSGVIGTASAY. The interval 410 to 432 is disordered; it reads GLDISRYSNSPENAKNAHPAPAH.

This sequence belongs to the DadA oxidoreductase family. FAD is required as a cofactor.

The catalysed reaction is a D-alpha-amino acid + A + H2O = a 2-oxocarboxylate + AH2 + NH4(+). It functions in the pathway amino-acid degradation; D-alanine degradation; NH(3) and pyruvate from D-alanine: step 1/1. Catalyzes the oxidative deamination of D-amino acids. Has very broad substrate specificity; all the D-amino acids tested can be used as the substrate except D-Glu and D-Gln. Participates in the utilization of several D-amino acids as the sole source of nitrogen, i.e. D-alanine, D-histidine, D-phenylalanine, D-serine, D-threonine, and D-valine. The chain is D-amino acid dehydrogenase 1 (dadA1) from Pseudomonas aeruginosa (strain ATCC 15692 / DSM 22644 / CIP 104116 / JCM 14847 / LMG 12228 / 1C / PRS 101 / PAO1).